The chain runs to 159 residues: Ribosomal RNA large subunit methyltransferase H (159 aa).

S-adenosyl-L-methionine-binding positions include Leu-76, Gly-108, and 127–132 (FSKMTL).

This sequence belongs to the RNA methyltransferase RlmH family. As to quaternary structure, homodimer.

It localises to the cytoplasm. It carries out the reaction pseudouridine(1915) in 23S rRNA + S-adenosyl-L-methionine = N(3)-methylpseudouridine(1915) in 23S rRNA + S-adenosyl-L-homocysteine + H(+). Its function is as follows. Specifically methylates the pseudouridine at position 1915 (m3Psi1915) in 23S rRNA. The polypeptide is Ribosomal RNA large subunit methyltransferase H (Bacillus cereus (strain ATCC 14579 / DSM 31 / CCUG 7414 / JCM 2152 / NBRC 15305 / NCIMB 9373 / NCTC 2599 / NRRL B-3711)).